The chain runs to 156 residues: Putative pre-16S rRNA nuclease (156 aa).

It belongs to the YqgF nuclease family.

The protein resides in the cytoplasm. Its function is as follows. Could be a nuclease involved in processing of the 5'-end of pre-16S rRNA. The polypeptide is Putative pre-16S rRNA nuclease (Albidiferax ferrireducens (strain ATCC BAA-621 / DSM 15236 / T118) (Rhodoferax ferrireducens)).